Reading from the N-terminus, the 566-residue chain is Glucose-6-phosphate isomerase, cytosolic (566 aa).

Glu-360 serves as the catalytic Proton donor. Residues His-391 and Lys-516 contribute to the active site.

Belongs to the GPI family. As to quaternary structure, homodimer.

It localises to the cytoplasm. The enzyme catalyses alpha-D-glucose 6-phosphate = beta-D-fructose 6-phosphate. It functions in the pathway carbohydrate degradation; glycolysis; D-glyceraldehyde 3-phosphate and glycerone phosphate from D-glucose: step 2/4. This chain is Glucose-6-phosphate isomerase, cytosolic (PGIC), found in Spinacia oleracea (Spinach).